The following is a 344-amino-acid chain: Uroporphyrinogen decarboxylase (344 aa).

Substrate is bound by residues 24 to 28 (RQAGR), F43, D74, Y151, S206, and H323.

Belongs to the uroporphyrinogen decarboxylase family. In terms of assembly, homodimer.

It localises to the cytoplasm. The catalysed reaction is uroporphyrinogen III + 4 H(+) = coproporphyrinogen III + 4 CO2. It functions in the pathway porphyrin-containing compound metabolism; protoporphyrin-IX biosynthesis; coproporphyrinogen-III from 5-aminolevulinate: step 4/4. Functionally, catalyzes the decarboxylation of four acetate groups of uroporphyrinogen-III to yield coproporphyrinogen-III. This Rhodobacter capsulatus (Rhodopseudomonas capsulata) protein is Uroporphyrinogen decarboxylase.